The following is a 517-amino-acid chain: RNA-binding region-containing protein 3 (517 aa).

Positions 1 to 26 are disordered; it reads MAAPEQPLAISRGCTSSSSLSPPRGD. Residues 1-257 are necessary for interaction with PDCD7; sequence MAAPEQPLAI…STDDEDRQRM (257 aa). Serine 21 carries the phosphoserine modification. In terms of domain architecture, RRM 1 spans 27 to 102; that stretch reads RTLLVRHLPA…HTLVVEFAKE (76 aa). 2 disordered regions span residues 106 to 130 and 213 to 254; these read VHSP…DDKE and MPLH…DEDR. Phosphoserine is present on serine 108. Basic and acidic residues predominate over residues 115 to 130; that stretch reads SEKKKRSDDPVEDDKE. A necessary for binding to m(7)G-capped U12 snRNA region spans residues 211-380; that stretch reads DYMPLHAPLP…LDITEEIKED (170 aa). Residues 217–230 are compositionally biased toward pro residues; the sequence is APLPPTSPQPPEEP. Acidic residues predominate over residues 231 to 252; it reads PLPDEDEELSSEESEYESTDDE. Positions 420–503 constitute an RRM 2 domain; it reads CRIYVKNLAK…KPMVVQFARS (84 aa).

In terms of assembly, component of the U11/U12 snRNPs that are part of the U12-type spliceosome. Found in a complex with m(7)G-capped U12 snRNA. Interacts with PDCD7. Highly expressed in pancreas and kidney. Detected at lower levels in heart, brain, placenta, lung, liver, spleen, thymus, prostate, testis, ovary, small intestine, colon and leukocytes.

It localises to the nucleus. Functionally, participates in pre-mRNA U12-dependent splicing, performed by the minor spliceosome which removes U12-type introns. U12-type introns comprises less than 1% of all non-coding sequences. Binds to the 3'-stem-loop of m(7)G-capped U12 snRNA. This Homo sapiens (Human) protein is RNA-binding region-containing protein 3 (RNPC3).